The sequence spans 167 residues: Phospholipase A and acyltransferase 1 (167 aa).

Topologically, residues 1-138 (MAVNDCFSLT…GEGVSEQANR (138 aa)) are cytoplasmic. Positions 20-135 (LIEVFRPCYQ…LRYGEGVSEQ (116 aa)) constitute an LRAT domain. Residue His30 is part of the active site. Cys119 acts as the Acyl-thioester intermediate in catalysis. Residues 139-159 (AIGTIGLVAAGIDIFTFLGLF) form a helical membrane-spanning segment. Residues 160–167 (PKRQRTKY) are Lumenal-facing.

Belongs to the H-rev107 family. As to expression, expressed in skeletal muscle, heart, brain, bone marrow and testis. Abundantly expressed in brain, heart, and skeletal muscle.

It localises to the membrane. The protein localises to the cytoplasm. Its subcellular location is the nucleus. The enzyme catalyses a 1,2-diacyl-sn-glycero-3-phosphocholine + H2O = a 1-acyl-sn-glycero-3-phosphocholine + a fatty acid + H(+). It carries out the reaction a 1,2-diacyl-sn-glycero-3-phosphocholine + H2O = a 2-acyl-sn-glycero-3-phosphocholine + a fatty acid + H(+). The catalysed reaction is 1,2-dihexadecanoyl-sn-glycero-3-phosphocholine + H2O = 2-hexadecanoyl-sn-glycero-3-phosphocholine + hexadecanoate + H(+). It catalyses the reaction 1,2-dihexadecanoyl-sn-glycero-3-phosphocholine + H2O = 1-hexadecanoyl-sn-glycero-3-phosphocholine + hexadecanoate + H(+). The enzyme catalyses 1-hexadecanoyl-2-(5Z,8Z,11Z,14Z-eicosatetraenoyl)-sn-glycero-3-phosphoethanolamine + H2O = 2-(5Z,8Z,11Z,14Z)-eicosatetraenoyl-sn-glycero-3-phosphoethanolamine + hexadecanoate + H(+). It carries out the reaction 1-hexadecanoyl-2-(5Z,8Z,11Z,14Z-eicosatetraenoyl)-sn-glycero-3-phosphoethanolamine + H2O = 1-hexadecanoyl-sn-glycero-3-phosphoethanolamine + (5Z,8Z,11Z,14Z)-eicosatetraenoate + H(+). The catalysed reaction is 1,2-di-(9Z-octadecenoyl)-sn-glycero-3-phosphoethanolamine + 1,2-dihexadecanoyl-sn-glycero-3-phosphocholine = hexadecanoyl-sn-glycero-3-phosphocholine + N-hexadecanoyl-1,2-di-(9Z-octadecenoyl)-sn-glycero-3-phosphoethanolamine + H(+). It catalyses the reaction 1,2-dihexadecanoyl-sn-glycero-3-phosphocholine + a 2-acyl-sn-glycero-3-phosphocholine = a 1-hexadecanoyl-2-acyl-sn-glycero-3-phosphocholine + 2-hexadecanoyl-sn-glycero-3-phosphocholine. In terms of biological role, exhibits both phospholipase A1/2 and acyltransferase activities. Shows phospholipase A1 (PLA1) and A2 (PLA2) activity, catalyzing the calcium-independent release of fatty acids from the sn-1 or sn-2 position of glycerophospholipids. Shows O-acyltransferase activity, catalyzing the transfer of a fatty acyl group from glycerophospholipid to the hydroxyl group of lysophospholipid. Shows N-acyltransferase activity, catalyzing the calcium-independent transfer of a fatty acyl group at the sn-1 position of phosphatidylcholine (PC) and other glycerophospholipids to the primary amine of phosphatidylethanolamine (PE), forming N-acylphosphatidylethanolamine (NAPE), which serves as precursor for N-acylethanolamines (NAEs). The sequence is that of Phospholipase A and acyltransferase 1 from Mus musculus (Mouse).